Reading from the N-terminus, the 609-residue chain is UvrABC system protein C (609 aa).

The region spanning 13-91 (HEPGVYRMYD…IKLYQPRYNV (79 aa)) is the GIY-YIG domain. One can recognise a UVR domain in the interval 201–236 (QQVLDYLIGKMEQASRNLDFEQAARYRDQIQAVRSV).

The protein belongs to the UvrC family. In terms of assembly, interacts with UvrB in an incision complex.

The protein resides in the cytoplasm. Functionally, the UvrABC repair system catalyzes the recognition and processing of DNA lesions. UvrC both incises the 5' and 3' sides of the lesion. The N-terminal half is responsible for the 3' incision and the C-terminal half is responsible for the 5' incision. In Haemophilus influenzae (strain 86-028NP), this protein is UvrABC system protein C.